The following is a 566-amino-acid chain: Transmembrane protein 151B (566 aa).

Residues M1–S11 show a composition bias toward low complexity. The tract at residues M1–S25 is disordered. A compositionally biased stretch (gly residues) spans A12–G23. The next 2 helical transmembrane spans lie at C65–T85 and Y112–W132. Residues V495–S512 show a composition bias toward polar residues. Residues V495–P529 are disordered. The span at G514 to A524 shows a compositional bias: acidic residues.

This sequence belongs to the TMEM151 family.

The protein localises to the membrane. This Homo sapiens (Human) protein is Transmembrane protein 151B (TMEM151B).